A 340-amino-acid chain; its full sequence is S-adenosylmethionine:tRNA ribosyltransferase-isomerase (340 aa).

It belongs to the QueA family. Monomer.

It localises to the cytoplasm. The enzyme catalyses 7-aminomethyl-7-carbaguanosine(34) in tRNA + S-adenosyl-L-methionine = epoxyqueuosine(34) in tRNA + adenine + L-methionine + 2 H(+). The protein operates within tRNA modification; tRNA-queuosine biosynthesis. Functionally, transfers and isomerizes the ribose moiety from AdoMet to the 7-aminomethyl group of 7-deazaguanine (preQ1-tRNA) to give epoxyqueuosine (oQ-tRNA). This chain is S-adenosylmethionine:tRNA ribosyltransferase-isomerase, found in Aliarcobacter butzleri (strain RM4018) (Arcobacter butzleri).